The primary structure comprises 427 residues: Anaerobic glycerol-3-phosphate dehydrogenase subunit B (427 aa).

This sequence belongs to the anaerobic G-3-P dehydrogenase subunit B family. As to quaternary structure, composed of a catalytic GlpA/B dimer and of membrane bound GlpC. FMN is required as a cofactor.

It catalyses the reaction a quinone + sn-glycerol 3-phosphate = dihydroxyacetone phosphate + a quinol. Its pathway is polyol metabolism; glycerol degradation via glycerol kinase pathway; glycerone phosphate from sn-glycerol 3-phosphate (anaerobic route): step 1/1. Its function is as follows. Conversion of glycerol 3-phosphate to dihydroxyacetone. Uses fumarate or nitrate as electron acceptor. This Glaesserella parasuis serovar 5 (strain SH0165) (Haemophilus parasuis) protein is Anaerobic glycerol-3-phosphate dehydrogenase subunit B.